A 64-amino-acid polypeptide reads, in one-letter code: Large ribosomal subunit protein bL35 (64 aa).

Basic residues predominate over residues 1-17 (MKQKTHSGIKKRIKKTG). The interval 1–64 (MKQKTHSGIK…KRVNRLLGEG (64 aa)) is disordered. Over residues 21 to 33 (LRREQANRRHLLE) the composition is skewed to basic and acidic residues.

The protein belongs to the bacterial ribosomal protein bL35 family.

In Corynebacterium kroppenstedtii (strain DSM 44385 / JCM 11950 / CIP 105744 / CCUG 35717), this protein is Large ribosomal subunit protein bL35.